Here is a 960-residue protein sequence, read N- to C-terminus: UPF0182 protein DSY1630 (960 aa).

7 helical membrane-spanning segments follow: residues 7-27 (IMLV…GLFE), 50-70 (IIQI…LFSI), 105-125 (TLWL…VTGF), 169-189 (FGPL…AGVI), 212-232 (LALL…FDTF), 256-276 (ALKA…LAFF), and 285-305 (LPIL…PMVL). 2 disordered regions span residues 866–899 (SALA…QEDT) and 924–960 (TGDS…KTNP). The segment covering 881–897 (ETEETTEETEEPVDPQE) has biased composition (acidic residues). Over residues 931 to 944 (EGGKKADEDAHDVQ) the composition is skewed to basic and acidic residues. Residues 950–960 (SVSSEQSKTNP) are compositionally biased toward polar residues.

Belongs to the UPF0182 family.

It localises to the cell membrane. This chain is UPF0182 protein DSY1630, found in Desulfitobacterium hafniense (strain Y51).